We begin with the raw amino-acid sequence, 688 residues long: Glycine--tRNA ligase beta subunit (688 aa).

Belongs to the class-II aminoacyl-tRNA synthetase family. In terms of assembly, tetramer of two alpha and two beta subunits.

Its subcellular location is the cytoplasm. The enzyme catalyses tRNA(Gly) + glycine + ATP = glycyl-tRNA(Gly) + AMP + diphosphate. This is Glycine--tRNA ligase beta subunit from Vibrio parahaemolyticus serotype O3:K6 (strain RIMD 2210633).